Here is an 80-residue protein sequence, read N- to C-terminus: RNA-binding protein Hfq (80 aa).

A Sm domain is found at 7–67 (ESFLNTARKK…ITTIVPHERL (61 aa)).

Belongs to the Hfq family. Homohexamer.

Its function is as follows. RNA chaperone that binds small regulatory RNA (sRNAs) and mRNAs to facilitate mRNA translational regulation in response to envelope stress, environmental stress and changes in metabolite concentrations. Also binds with high specificity to tRNAs. The chain is RNA-binding protein Hfq from Aquifex aeolicus (strain VF5).